Here is a 44-residue protein sequence, read N- to C-terminus: Hyaluronidase CdtHya1 (44 aa).

It belongs to the glycosyl hydrolase 56 family. Monomer. Post-translationally, contains disulfide bonds. Glycosylated. Expressed by the venom gland.

Its subcellular location is the secreted. The catalysed reaction is Random hydrolysis of (1-&gt;4)-linkages between N-acetyl-beta-D-glucosamine and D-glucuronate residues in hyaluronate.. Snake venom endo-hyaluronidase that degrades hyaluronan to smaller oligosaccharide fragments. In venom, it is not toxic by itself, but increases the diffusion of other venom proteins such as crotoxin (a neurotoxic and myotoxic PLA2) by degrading the extracellular matrix. In addition, it displays antiedematogenic activity, since it significantly diminishes the oedematogenic activity of crotoxin (probably by direct substrate hydrolysis, since hyaluronan possesses strong water-binding capacity). The chain is Hyaluronidase CdtHya1 from Crotalus durissus terrificus (South American rattlesnake).